A 702-amino-acid chain; its full sequence is Arylphorin subunit alpha (702 aa).

An N-terminal signal peptide occupies residues 1–16 (MKTVVILAGLVALALS). Residues N75 and N214 are each glycosylated (N-linked (GlcNAc...) asparagine).

The protein belongs to the hemocyanin family. Arylphorin is a hexamer of subunits alpha and beta. In terms of tissue distribution, fat body.

It is found in the secreted. Its subcellular location is the extracellular space. In terms of biological role, arylphorin is a larval storage protein (LSP) which may serve as a storage protein used primarily as a source of aromatic amino acids for protein synthesis during metamorphosis. It is a constituent of the sclerotizing system of the cuticle, and serves as a carrier for ecdysteroid hormone. This chain is Arylphorin subunit alpha, found in Manduca sexta (Tobacco hawkmoth).